The primary structure comprises 156 residues: Snaclec A3 (156 aa).

The first 23 residues, 1-23, serve as a signal peptide directing secretion; that stretch reads MGRSISVSFGLLVVFLSLSGTGA. 3 cysteine pairs are disulfide-bonded: cysteine 27/cysteine 38, cysteine 55/cysteine 154, and cysteine 129/cysteine 146. In terms of domain architecture, C-type lectin spans 34–155; sequence HEGHCYKVFN…CGQPYRFTCE (122 aa).

This sequence belongs to the snaclec family. As to quaternary structure, heterodimer; disulfide-linked. As to expression, expressed by the venom gland.

It localises to the secreted. Interferes with one step of hemostasis (modulation of platelet aggregation, or coagulation cascade, for example). This is Snaclec A3 from Macrovipera lebetinus (Levantine viper).